The sequence spans 424 residues: Adenylosuccinate synthetase (424 aa).

Residues 12 to 18 (GDEGKGK) and 40 to 42 (GHT) contribute to the GTP site. The Proton acceptor role is filled by Asp-13. Residues Asp-13 and Gly-40 each coordinate Mg(2+). IMP-binding positions include 13 to 16 (DEGK), 38 to 41 (NAGH), Thr-130, Arg-144, Asn-220, Thr-235, and Arg-299. Residue His-41 is the Proton donor of the active site. 295-301 (VTTGRRR) contacts substrate. GTP contacts are provided by residues Arg-301, 327 to 329 (KLD), and 412 to 414 (GTG).

Belongs to the adenylosuccinate synthetase family. As to quaternary structure, homodimer. Requires Mg(2+) as cofactor.

The protein resides in the cytoplasm. It catalyses the reaction IMP + L-aspartate + GTP = N(6)-(1,2-dicarboxyethyl)-AMP + GDP + phosphate + 2 H(+). It participates in purine metabolism; AMP biosynthesis via de novo pathway; AMP from IMP: step 1/2. In terms of biological role, plays an important role in the de novo pathway and in the salvage pathway of purine nucleotide biosynthesis. Catalyzes the first committed step in the biosynthesis of AMP from IMP. This Neosartorya fischeri (strain ATCC 1020 / DSM 3700 / CBS 544.65 / FGSC A1164 / JCM 1740 / NRRL 181 / WB 181) (Aspergillus fischerianus) protein is Adenylosuccinate synthetase.